A 1208-amino-acid polypeptide reads, in one-letter code: DNA-directed RNA polymerase subunit beta (1208 aa).

It belongs to the RNA polymerase beta chain family. In terms of assembly, the RNAP catalytic core consists of 2 alpha, 1 beta, 1 beta' and 1 omega subunit. When a sigma factor is associated with the core the holoenzyme is formed, which can initiate transcription.

It catalyses the reaction RNA(n) + a ribonucleoside 5'-triphosphate = RNA(n+1) + diphosphate. In terms of biological role, DNA-dependent RNA polymerase catalyzes the transcription of DNA into RNA using the four ribonucleoside triphosphates as substrates. In Enterococcus faecium (Streptococcus faecium), this protein is DNA-directed RNA polymerase subunit beta.